A 328-amino-acid chain; its full sequence is MNQQTTNRDTGEAAATNAPANSATSTSTPDNQPTPLDAFEVLLITGMSGAGRSHAADCVEDMGWYVVDNLPPKLLIPLVDMMTTSGSGSESGVHKLAAVIDVRSSYFDELAAVLGHLDDLGVKTRILFLDASNEVLIKRYESVRRPHPLQHGNRLIDGILEERHLLEDLKERADWVIDTSSLSIHQLSTKLYEAMLGSGPTTVAVHIFSFGFKYGMPIDADFVADVRFLPNPFWVPSLRELTGRDKPVADYVLSSKGAKEFLDAYEKAIEIALEGYAQEDKHYVTIAVGCTGGQHRSVAMSEELARRLRAHGLNVTVSAREQHKRHSS.

Residues 1–35 are disordered; it reads MNQQTTNRDTGEAAATNAPANSATSTSTPDNQPTP. A compositionally biased stretch (low complexity) spans 13-29; the sequence is AAATNAPANSATSTSTP. An ATP-binding site is contributed by 46–53; it reads GMSGAGRS. Position 101-104 (101-104) interacts with GTP; sequence DVRS.

The protein belongs to the RapZ-like family.

Functionally, displays ATPase and GTPase activities. This Bifidobacterium longum (strain NCC 2705) protein is Nucleotide-binding protein BL0705.